The primary structure comprises 102 residues: Small ribosomal subunit protein uS10 (102 aa).

Belongs to the universal ribosomal protein uS10 family. As to quaternary structure, part of the 30S ribosomal subunit.

Its function is as follows. Involved in the binding of tRNA to the ribosomes. This Thermotoga neapolitana (strain ATCC 49049 / DSM 4359 / NBRC 107923 / NS-E) protein is Small ribosomal subunit protein uS10.